A 700-amino-acid polypeptide reads, in one-letter code: Elongation factor G (700 aa).

The region spanning Thr10–Leu286 is the tr-type G domain. GTP-binding positions include Ala19 to Thr26, Asp83 to His87, and Asn137 to Asp140.

The protein belongs to the TRAFAC class translation factor GTPase superfamily. Classic translation factor GTPase family. EF-G/EF-2 subfamily.

It localises to the cytoplasm. Catalyzes the GTP-dependent ribosomal translocation step during translation elongation. During this step, the ribosome changes from the pre-translocational (PRE) to the post-translocational (POST) state as the newly formed A-site-bound peptidyl-tRNA and P-site-bound deacylated tRNA move to the P and E sites, respectively. Catalyzes the coordinated movement of the two tRNA molecules, the mRNA and conformational changes in the ribosome. This chain is Elongation factor G, found in Mycolicibacterium vanbaalenii (strain DSM 7251 / JCM 13017 / BCRC 16820 / KCTC 9966 / NRRL B-24157 / PYR-1) (Mycobacterium vanbaalenii).